Consider the following 443-residue polypeptide: MTFSEILTKVQNNLDIVFNNETLRTRIKTDSDFAKTILAQLKLLYFLEEKQKRVKTKKPDHFLFGSFHDKFIQLGQNQLSEKELKAAKFDLTDALDLANYLNVAVKNLFNKELNSFTKLAETQVKPVSELQENNKTVKDNPSFQTINNSQQLNSGLENNILQQTLQVRARDRAFGRFTSEKLVGKIFEFQFKSQWIKWAQLAIFISMIAIFFISIAYVVMVNVFFTHFVDKNSPLFNVNNDQNTVQQSNADTTNLNRFFALSSSNLITMIFLAFGGASFFFAFQGKPYSFATRGQTNRAMRYLRSEFGVKEFPKINDNYRYKVRIKWIFWTIFIFVFLNCIPGNIVRSGFWNAALIIRLFSENQLISVSPLFASYLIGIAWLFVFSIVPFSIISVIAFSLSPKLNLEQTNEIFNKYFQEELAKPITSDESKTTLDIPPPTIFG.

This is an uncharacterized protein from Mycoplasma genitalium (strain ATCC 33530 / DSM 19775 / NCTC 10195 / G37) (Mycoplasmoides genitalium).